We begin with the raw amino-acid sequence, 122 residues long: Large ribosomal subunit protein uL18 (122 aa).

Belongs to the universal ribosomal protein uL18 family. Part of the 50S ribosomal subunit; part of the 5S rRNA/L5/L18/L25 subcomplex. Contacts the 5S and 23S rRNAs.

In terms of biological role, this is one of the proteins that bind and probably mediate the attachment of the 5S RNA into the large ribosomal subunit, where it forms part of the central protuberance. The polypeptide is Large ribosomal subunit protein uL18 (Leptospira borgpetersenii serovar Hardjo-bovis (strain JB197)).